The primary structure comprises 468 residues: Dimethylamine methyltransferase MtbB2 (468 aa).

Position 356 (Pyl356) is a non-standard amino acid, pyrrolysine.

The protein belongs to the dimethylamine methyltransferase family.

The enzyme catalyses Co(I)-[dimethylamine-specific corrinoid protein] + dimethylamine + H(+) = methyl-Co(III)-[dimethylamine-specific corrinoid protein] + methylamine. It functions in the pathway one-carbon metabolism; methanogenesis from dimethylamine. Catalyzes the transfer of a methyl group from dimethylamine to the corrinoid cofactor of MtbC. This Methanosarcina acetivorans (strain ATCC 35395 / DSM 2834 / JCM 12185 / C2A) protein is Dimethylamine methyltransferase MtbB2 (mtbB2).